Reading from the N-terminus, the 221-residue chain is 3-phospho-D-glycerate guanylyltransferase (221 aa).

This sequence belongs to the CofC family.

The enzyme catalyses (2R)-3-phosphoglycerate + GTP + H(+) = 3-[(R)-glyceryl]-diphospho-5'-guanosine + diphosphate. It carries out the reaction (2S)-2-phospholactate + GTP + H(+) = (2S)-lactyl-2-diphospho-5'-guanosine + diphosphate. It participates in cofactor biosynthesis; coenzyme F420 biosynthesis. In terms of biological role, guanylyltransferase that catalyzes the activation of (2R)-3-phosphoglycerate (3PG) as 3-[(R)-glyceryl]-diphospho-5'-guanosine, via the condensation of 3PG with GTP. It is involved in the biosynthesis of a derivative of the hydride carrier cofactor coenzyme F420, 3PG-F420. Can also use (2S)-2-phospholactate (2-PL), with lower turnover, and has weak activity with phosphoenolpyruvate (PEP). The protein is 3-phospho-D-glycerate guanylyltransferase of Mycetohabitans rhizoxinica (strain DSM 19002 / CIP 109453 / HKI 454) (Paraburkholderia rhizoxinica).